A 611-amino-acid polypeptide reads, in one-letter code: Threonine--tRNA ligase (611 aa).

Residues 1–27 form a disordered region; the sequence is MAGPEPEPVSSAAATTPAPSAPVVLPK. Positions 8–24 are enriched in low complexity; it reads PVSSAAATTPAPSAPVV. A catalytic region spans residues 209–502; the sequence is DHRRIGKDLD…MTENYAGDYP (294 aa). The Zn(2+) site is built by C302, H353, and H479.

It belongs to the class-II aminoacyl-tRNA synthetase family. Homodimer. Zn(2+) serves as cofactor.

It localises to the cytoplasm. The enzyme catalyses tRNA(Thr) + L-threonine + ATP = L-threonyl-tRNA(Thr) + AMP + diphosphate + H(+). In terms of biological role, catalyzes the attachment of threonine to tRNA(Thr) in a two-step reaction: L-threonine is first activated by ATP to form Thr-AMP and then transferred to the acceptor end of tRNA(Thr). Also edits incorrectly charged L-seryl-tRNA(Thr). The protein is Threonine--tRNA ligase of Synechococcus sp. (strain CC9605).